Reading from the N-terminus, the 1060-residue chain is Histone lysine demethylase PHF8 (1060 aa).

The PHD-type zinc-finger motif lies at P41–L92. At S69 the chain carries Phosphoserine; by CDK1. The disordered stretch occupies residues K100–S120. Positions R101–P115 are linker. Phosphoserine; by CDK1 is present on S120. The JmjC domain maps to F231–K387. T280 contacts substrate. 2 residues coordinate Fe cation: H283 and D285. Substrate is bound at residue K300. Fe cation is bound at residue H355. Over residues A508–R517 the composition is skewed to polar residues. Residues A508–K534 form a disordered region. S651 is subject to Phosphoserine. Position 704 is a phosphotyrosine (Y704). A phosphothreonine mark is found at T705 and T706. S722 carries the post-translational modification Phosphoserine. Disordered regions lie at residues Q768–S840, Y852–V902, and K915–L1046. 2 stretches are compositionally biased toward low complexity: residues S769–S778 and G785–S804. S804, S826, S834, S854, S857, and S880 each carry phosphoserine. Residues S826–D839 are compositionally biased toward acidic residues. The span at K891 to T900 shows a compositional bias: basic and acidic residues. The segment covering A924–P934 has biased composition (basic residues). Residues R1018–G1030 show a composition bias toward polar residues.

It belongs to the JHDM1 histone demethylase family. JHDM1D subfamily. As to quaternary structure, interacts with POLR1B, UBTF, SETD1A, HCFC1, E2F1 and ZNF711. Interacts with ZNF263; recruited to the SIX3 promoter along with other proteins involved in chromatin modification and transcriptional corepression where it contributes to transcriptional repression. Requires Fe(2+) as cofactor. Phosphorylation at Ser-69 and Ser-120 are required for dissociation from chromatin and accumulation of H4K20Me1 levels during prophase.

It localises to the nucleus. The protein resides in the nucleolus. It catalyses the reaction N(6),N(6)-dimethyl-L-lysyl(36)-[histone H3] + 2 2-oxoglutarate + 2 O2 = L-lysyl(36)-[histone H3] + 2 formaldehyde + 2 succinate + 2 CO2. The enzyme catalyses N(6),N(6)-dimethyl-L-lysyl(9)-[histone H3] + 2 2-oxoglutarate + 2 O2 = L-lysyl(9)-[histone H3] + 2 formaldehyde + 2 succinate + 2 CO2. In terms of biological role, histone lysine demethylase with selectivity for the di- and monomethyl states that plays a key role cell cycle progression, rDNA transcription and brain development. Demethylates mono- and dimethylated histone H3 'Lys-9' residue (H3K9Me1 and H3K9Me2), dimethylated H3 'Lys-27' (H3K27Me2) and monomethylated histone H4 'Lys-20' residue (H4K20Me1). Acts as a transcription activator as H3K9Me1, H3K9Me2, H3K27Me2 and H4K20Me1 are epigenetic repressive marks. Involved in cell cycle progression by being required to control G1-S transition. Acts as a coactivator of rDNA transcription, by activating polymerase I (pol I) mediated transcription of rRNA genes. Required for brain development, probably by regulating expression of neuron-specific genes. Only has activity toward H4K20Me1 when nucleosome is used as a substrate and when not histone octamer is used as substrate. May also have weak activity toward dimethylated H3 'Lys-36' (H3K36Me2), however, the relevance of this result remains unsure in vivo. Specifically binds trimethylated 'Lys-4' of histone H3 (H3K4me3), affecting histone demethylase specificity: has weak activity toward H3K9Me2 in absence of H3K4me3, while it has high activity toward H3K9me2 when binding H3K4me3. Positively modulates transcription of histone demethylase KDM5C, acting synergistically with transcription factor ARX; synergy may be related to enrichment of histone H3K4me3 in regulatory elements. The polypeptide is Histone lysine demethylase PHF8 (PHF8) (Homo sapiens (Human)).